A 343-amino-acid chain; its full sequence is CRISPR-associated endonuclease Cas1 1 (343 aa).

Mn(2+) contacts are provided by E166, H234, and E249.

This sequence belongs to the CRISPR-associated endonuclease Cas1 family. In terms of assembly, homodimer, forms a heterotetramer with a Cas2 homodimer. Mg(2+) serves as cofactor. It depends on Mn(2+) as a cofactor.

Its function is as follows. CRISPR (clustered regularly interspaced short palindromic repeat), is an adaptive immune system that provides protection against mobile genetic elements (viruses, transposable elements and conjugative plasmids). CRISPR clusters contain spacers, sequences complementary to antecedent mobile elements, and target invading nucleic acids. CRISPR clusters are transcribed and processed into CRISPR RNA (crRNA). Acts as a dsDNA endonuclease. Involved in the integration of spacer DNA into the CRISPR cassette. This chain is CRISPR-associated endonuclease Cas1 1, found in Chlorobaculum tepidum (strain ATCC 49652 / DSM 12025 / NBRC 103806 / TLS) (Chlorobium tepidum).